The sequence spans 199 residues: Acireductone dioxygenase 1 (199 aa).

Fe(2+) is bound by residues H99, H101, E105, and H144. Ni(2+)-binding residues include H99, H101, E105, and H144.

Belongs to the acireductone dioxygenase (ARD) family. Requires Fe(2+) as cofactor. It depends on Ni(2+) as a cofactor.

It localises to the cytoplasm. The protein localises to the nucleus. It catalyses the reaction 1,2-dihydroxy-5-(methylsulfanyl)pent-1-en-3-one + O2 = 4-methylsulfanyl-2-oxobutanoate + formate + 2 H(+). It carries out the reaction 1,2-dihydroxy-5-(methylsulfanyl)pent-1-en-3-one + O2 = 3-(methylsulfanyl)propanoate + CO + formate + 2 H(+). It participates in amino-acid biosynthesis; L-methionine biosynthesis via salvage pathway; L-methionine from S-methyl-5-thio-alpha-D-ribose 1-phosphate: step 5/6. Catalyzes 2 different reactions between oxygen and the acireductone 1,2-dihydroxy-3-keto-5-methylthiopentene (DHK-MTPene) depending upon the metal bound in the active site. Fe-containing acireductone dioxygenase (Fe-ARD) produces formate and 2-keto-4-methylthiobutyrate (KMTB), the alpha-ketoacid precursor of methionine in the methionine recycle pathway. Ni-containing acireductone dioxygenase (Ni-ARD) produces methylthiopropionate, carbon monoxide and formate, and does not lie on the methionine recycle pathway. The chain is Acireductone dioxygenase 1 (ARD1) from Arabidopsis thaliana (Mouse-ear cress).